We begin with the raw amino-acid sequence, 106 residues long: Large ribosomal subunit protein P1 (106 aa).

A compositionally biased stretch (low complexity) spans 66–76; it reads AQPQATQAQPA. The segment at 66-106 is disordered; sequence AQPQATQAQPAAEEKKEEKKEEEKKGPSEEEIASGLASLFG. The span at 77–93 shows a compositional bias: basic and acidic residues; sequence AEEKKEEKKEEEKKGPS.

This sequence belongs to the eukaryotic ribosomal protein P1/P2 family. In terms of assembly, part of the 50S ribosomal subunit. Homodimer, it forms part of the ribosomal stalk which helps the ribosome interact with GTP-bound translation factors. Forms a heptameric uL10/P0(P1)2(P1)2(P1)2 complex, where uL10/P0 forms an elongated spine to which the P1 dimers bind in a sequential fashion.

In terms of biological role, forms part of the ribosomal stalk, playing a central role in the interaction of the ribosome with GTP-bound translation factors. This chain is Large ribosomal subunit protein P1, found in Saccharolobus solfataricus (strain ATCC 35092 / DSM 1617 / JCM 11322 / P2) (Sulfolobus solfataricus).